The primary structure comprises 334 residues: GTP 3',8-cyclase (334 aa).

In terms of domain architecture, Radical SAM core spans 13 to 239 (RFHRKFYYLR…KVKAANDGPA (227 aa)). R22 lines the GTP pocket. Residues C29 and C33 each contribute to the [4Fe-4S] cluster site. Y35 serves as a coordination point for S-adenosyl-L-methionine. [4Fe-4S] cluster is bound at residue C36. Position 73 (R73) interacts with GTP. G77 provides a ligand contact to S-adenosyl-L-methionine. T104 lines the GTP pocket. An S-adenosyl-L-methionine-binding site is contributed by S128. Position 165 (K165) interacts with GTP. M199 contacts S-adenosyl-L-methionine. [4Fe-4S] cluster is bound by residues C262 and C265. Residue 267-269 (RLR) coordinates GTP. C279 is a binding site for [4Fe-4S] cluster.

The protein belongs to the radical SAM superfamily. MoaA family. In terms of assembly, monomer and homodimer. It depends on [4Fe-4S] cluster as a cofactor.

It carries out the reaction GTP + AH2 + S-adenosyl-L-methionine = (8S)-3',8-cyclo-7,8-dihydroguanosine 5'-triphosphate + 5'-deoxyadenosine + L-methionine + A + H(+). It functions in the pathway cofactor biosynthesis; molybdopterin biosynthesis. Its function is as follows. Catalyzes the cyclization of GTP to (8S)-3',8-cyclo-7,8-dihydroguanosine 5'-triphosphate. This chain is GTP 3',8-cyclase, found in Vibrio vulnificus (strain YJ016).